The following is a 180-amino-acid chain: Bifunctional protein PyrR (180 aa).

Residues 101 to 113 (VVLVDDVIFKGRT) carry the PRPP-binding motif.

The protein belongs to the purine/pyrimidine phosphoribosyltransferase family. PyrR subfamily.

The enzyme catalyses UMP + diphosphate = 5-phospho-alpha-D-ribose 1-diphosphate + uracil. Functionally, regulates the transcription of the pyrimidine nucleotide (pyr) operon in response to exogenous pyrimidines. Its function is as follows. Also displays a weak uracil phosphoribosyltransferase activity which is not physiologically significant. This chain is Bifunctional protein PyrR, found in Trichormus variabilis (strain ATCC 29413 / PCC 7937) (Anabaena variabilis).